Here is a 277-residue protein sequence, read N- to C-terminus: Protein PTST, chloroplastic (277 aa).

Residues 1-44 (MGCVPRIEFGCSSQSLTLSWNLRAWNLCRLNTISHFQKLPYPLV) constitute a chloroplast transit peptide. The stretch at 95 to 152 (DTERSKLVKKLSEANQQNRFLKRQLKTQEHEITNIKTELALMELEVQALVKLAEEIAN) forms a coiled coil.

In terms of assembly, interacts with GBSS1.

It is found in the plastid. The protein resides in the chloroplast stroma. Involved in targeting GBSS1 to the starch granule. Was originally thought to be a carbohydrate-binding scaffold protein, but it has been shown that it is mainly found as a soluble protein and that interaction with GBSS1 is a pre-requisite for subsequent starch granule binding. Dissociation from starch as a function of pH, Mg(2+) concentration or redox state is not observed. Interacts primarily with amylopectin and is required for amylose synthesis. The polypeptide is Protein PTST, chloroplastic (Arabidopsis thaliana (Mouse-ear cress)).